Here is a 911-residue protein sequence, read N- to C-terminus: Nitrate reductase [NADH], clone PBNBR1405 (911 aa).

The tract at residues 1-68 (MATSVDNRHY…RFDSSDDEDE (68 aa)) is disordered. Residues 49–62 (KSVDKTTKEDRFDS) are compositionally biased toward basic and acidic residues. Cys191 lines the Mo-molybdopterin pocket. A Cytochrome b5 heme-binding domain is found at 539–614 (SKMYSMSEVR…LEDYRIGELI (76 aa)). His574 and His597 together coordinate heme. The FAD-binding FR-type domain maps to 654–766 (REKVPVKLIE…KGPLGHIEYQ (113 aa)). Residues 706 to 709 (RAYT), 723 to 727 (VIKVY), Phe728, Phe735, 740 to 742 (LMS), and Thr793 contribute to the FAD site.

Belongs to the nitrate reductase family. Homodimer. Requires FAD as cofactor. Heme serves as cofactor. Mo-molybdopterin is required as a cofactor.

The enzyme catalyses nitrite + NAD(+) + H2O = nitrate + NADH + H(+). In terms of biological role, nitrate reductase is a key enzyme involved in the first step of nitrate assimilation in plants, fungi and bacteria. This Brassica napus (Rape) protein is Nitrate reductase [NADH], clone PBNBR1405 (NIA1).